A 343-amino-acid chain; its full sequence is Uroporphyrinogen decarboxylase (343 aa).

Residues 24–28 (RQAGR), phenylalanine 43, aspartate 74, tyrosine 151, serine 206, and histidine 321 each bind substrate.

This sequence belongs to the uroporphyrinogen decarboxylase family. In terms of assembly, homodimer.

It is found in the cytoplasm. The enzyme catalyses uroporphyrinogen III + 4 H(+) = coproporphyrinogen III + 4 CO2. Its pathway is porphyrin-containing compound metabolism; protoporphyrin-IX biosynthesis; coproporphyrinogen-III from 5-aminolevulinate: step 4/4. In terms of biological role, catalyzes the decarboxylation of four acetate groups of uroporphyrinogen-III to yield coproporphyrinogen-III. The sequence is that of Uroporphyrinogen decarboxylase from Thermosynechococcus vestitus (strain NIES-2133 / IAM M-273 / BP-1).